The primary structure comprises 260 residues: Imidazole glycerol phosphate synthase subunit HisF (260 aa).

Catalysis depends on residues D11 and D130.

Belongs to the HisA/HisF family. In terms of assembly, heterodimer of HisH and HisF.

It is found in the cytoplasm. The enzyme catalyses 5-[(5-phospho-1-deoxy-D-ribulos-1-ylimino)methylamino]-1-(5-phospho-beta-D-ribosyl)imidazole-4-carboxamide + L-glutamine = D-erythro-1-(imidazol-4-yl)glycerol 3-phosphate + 5-amino-1-(5-phospho-beta-D-ribosyl)imidazole-4-carboxamide + L-glutamate + H(+). The protein operates within amino-acid biosynthesis; L-histidine biosynthesis; L-histidine from 5-phospho-alpha-D-ribose 1-diphosphate: step 5/9. Its function is as follows. IGPS catalyzes the conversion of PRFAR and glutamine to IGP, AICAR and glutamate. The HisF subunit catalyzes the cyclization activity that produces IGP and AICAR from PRFAR using the ammonia provided by the HisH subunit. The chain is Imidazole glycerol phosphate synthase subunit HisF from Psychrobacter cryohalolentis (strain ATCC BAA-1226 / DSM 17306 / VKM B-2378 / K5).